A 753-amino-acid polypeptide reads, in one-letter code: Rsm22-cox11 tandem protein 2, mitochondrial (753 aa).

A mitochondrion-targeting transit peptide spans 1–39 (MPILTCRYKILFLYNLRNCFTFQNQRCLIPYGTTTTIRW). 4 residues coordinate [4Fe-4S] cluster: Cys323, Cys329, Cys342, and Cys430. The helical transmembrane segment at 571–591 (IYYLVAISIFALGLTYAAVPL) threads the bilayer. At 592–753 (YRLFCSKTGY…TNGNLLTKLN (162 aa)) the chain is on the mitochondrial intermembrane side.

It in the N-terminal section; belongs to the methyltransferase superfamily. Rsm22 family. This sequence in the C-terminal section; belongs to the COX11/CtaG family. As to quaternary structure, associates with the mitochondrial ribosome (mitoribosome). Only transiently interacts with the mitoribosome. Specific enzymatic cleavages in vivo by mitochondrial processing peptidase (MPP) yield mature proteins including rsm22-2 and cox11-2.

It is found in the mitochondrion. Its subcellular location is the mitochondrion inner membrane. Its function is as follows. Mitochondrial ribosome (mitoribosome) assembly factor. Binds at the interface of the head and body domains of the mitochondrial small ribosomal subunit (mt-SSU), occluding the mRNA channel and preventing compaction of the head domain towards the body. Probable inactive methyltransferase: retains the characteristic folding and ability to bind S-adenosyl-L-methionine, but it probably lost its methyltransferase activity. Exerts its effect at some terminal stage of cytochrome c oxidase synthesis, probably by being involved in the insertion of the copper B into subunit I. This chain is Rsm22-cox11 tandem protein 2, mitochondrial (cox1102), found in Schizosaccharomyces pombe (strain 972 / ATCC 24843) (Fission yeast).